Reading from the N-terminus, the 100-residue chain is Integration host factor subunit alpha (100 aa).

The protein belongs to the bacterial histone-like protein family. As to quaternary structure, heterodimer of an alpha and a beta chain.

Its function is as follows. This protein is one of the two subunits of integration host factor, a specific DNA-binding protein that functions in genetic recombination as well as in transcriptional and translational control. The chain is Integration host factor subunit alpha from Ectopseudomonas mendocina (strain ymp) (Pseudomonas mendocina).